A 436-amino-acid polypeptide reads, in one-letter code: GTPase Der (436 aa).

EngA-type G domains lie at 4–167 and 176–351; these read PVVA…PKEE and VKFS…DNHS. GTP contacts are provided by residues 10-17, 57-61, 119-122, 182-189, 229-233, and 294-297; these read GRPNVGKS, DTGGI, NKVD, DTAGM, and NKWD. The 85-residue stretch at 352–436 folds into the KH-like domain; sequence LRVQSSMLND…PIRVIARKRK (85 aa).

The protein belongs to the TRAFAC class TrmE-Era-EngA-EngB-Septin-like GTPase superfamily. EngA (Der) GTPase family. As to quaternary structure, associates with the 50S ribosomal subunit.

GTPase that plays an essential role in the late steps of ribosome biogenesis. The sequence is that of GTPase Der from Listeria monocytogenes serotype 4b (strain F2365).